The chain runs to 76 residues: Immune protein Tsi5 (76 aa).

Helical transmembrane passes span 19-39 (LLMT…EWFF) and 43-63 (WVTV…LYLY).

The protein localises to the membrane. Immunity protein that plays a role in preventing early activation of toxin Tse5. This is Immune protein Tsi5 from Pseudomonas aeruginosa (strain ATCC 15692 / DSM 22644 / CIP 104116 / JCM 14847 / LMG 12228 / 1C / PRS 101 / PAO1).